Consider the following 193-residue polypeptide: Penicillin-binding protein activator LpoB (193 aa).

An N-terminal signal peptide occupies residues 1 to 16 (MKKYLGVILAALVLTG). Cysteine 17 carries N-palmitoyl cysteine lipidation. A lipid anchor (S-diacylglycerol cysteine) is attached at cysteine 17. The tract at residues 17–55 (CPSRPPEPTEPPATIEPVEPQVPTTPTLPPGESVPQPPK) is disordered. Positions 28–41 (PATIEPVEPQVPTT) are enriched in low complexity.

This sequence belongs to the LpoB family. In terms of assembly, interacts with PBP1b.

It is found in the cell outer membrane. Its function is as follows. Regulator of peptidoglycan synthesis that is essential for the function of penicillin-binding protein 1B (PBP1b). The polypeptide is Penicillin-binding protein activator LpoB (Pectobacterium carotovorum subsp. carotovorum (strain PC1)).